Consider the following 380-residue polypeptide: MAPNIRKSHPLLKMINNSLIDLPSPSNISAWWNFGSLLGICLTTQILTGLLLAMHYTADTTLAFSSVAHTCRNVQYGWLIRNLHANGASFFFICIYLHIGRGFYYGSYLHKETWNTGVILLLTLMATAFVGYVLPWGQMSFWGATVITNLFSAIPYIGQTLVEWAWGGFSVDNPTLTRFFALHFLLPFMIAGLTTIHLTFLHESGSNNPLGITSNCDKIPFHPYFTLKDILGFTLMLLPLTTLALFSPNLLGDPENFTPANPLITPPHIKPEWYFLFAYAILRSIPNKLGGVLALAASVLILFLIPFLHKAKQRTMTFRPISQLLFWILVTNLLILTWVGSQPVEHPFIIIGQLASITYFTILLVLFPITEALENKMLNY.

4 helical membrane passes run 34–54 (FGSL…LLAM), 78–99 (WLIR…YLHI), 114–134 (WNTG…GYVL), and 179–199 (FFAL…IHLT). Residues His84 and His98 each contribute to the heme b site. Heme b-binding residues include His183 and His197. A ubiquinone is bound at residue His202. The next 4 helical transmembrane spans lie at 227-247 (LKDI…ALFS), 289-309 (LGGV…PFLH), 321-341 (ISQL…WVGS), and 348-368 (FIII…VLFP).

The protein belongs to the cytochrome b family. As to quaternary structure, the cytochrome bc1 complex contains 11 subunits: 3 respiratory subunits (MT-CYB, CYC1 and UQCRFS1), 2 core proteins (UQCRC1 and UQCRC2) and 6 low-molecular weight proteins (UQCRH/QCR6, UQCRB/QCR7, UQCRQ/QCR8, UQCR10/QCR9, UQCR11/QCR10 and a cleavage product of UQCRFS1). This cytochrome bc1 complex then forms a dimer. The cofactor is heme b.

The protein resides in the mitochondrion inner membrane. Its function is as follows. Component of the ubiquinol-cytochrome c reductase complex (complex III or cytochrome b-c1 complex) that is part of the mitochondrial respiratory chain. The b-c1 complex mediates electron transfer from ubiquinol to cytochrome c. Contributes to the generation of a proton gradient across the mitochondrial membrane that is then used for ATP synthesis. This chain is Cytochrome b (MT-CYB), found in Pelecanoides georgicus (South Georgia diving petrel).